A 78-amino-acid polypeptide reads, in one-letter code: Large ribosomal subunit protein bL28 (78 aa).

Residues 1 to 28 (MSAICQVTGRQPGYGKSVSHSHRRTSRR) form a disordered region.

This sequence belongs to the bacterial ribosomal protein bL28 family.

The chain is Large ribosomal subunit protein bL28 from Corynebacterium diphtheriae (strain ATCC 700971 / NCTC 13129 / Biotype gravis).